The following is a 139-amino-acid chain: MLMPKKVKYRKQQRGRMRGKAWRGSELSFGDFGLKVLEPGWISDRQIEASRVAMTRFIKRGGKIWIRLFPDKPVTKKPAETRMGKGKGAPDHWVAVVRPGKILFEMEGVSVTDAAEAMRLAAHKLPLRTKFVARETSAH.

This sequence belongs to the universal ribosomal protein uL16 family. As to quaternary structure, part of the 50S ribosomal subunit.

Binds 23S rRNA and is also seen to make contacts with the A and possibly P site tRNAs. This Koribacter versatilis (strain Ellin345) protein is Large ribosomal subunit protein uL16.